Here is a 68-residue protein sequence, read N- to C-terminus: Protein SlyX homolog (68 aa).

The protein belongs to the SlyX family.

The sequence is that of Protein SlyX homolog from Pseudomonas fluorescens (strain SBW25).